Here is a 514-residue protein sequence, read N- to C-terminus: Probable drug/proton antiporter YHK8 (514 aa).

Over 1-74 the chain is Cytoplasmic; the sequence is MVAEFQIASA…RHMSTARRYY (74 aa). A helical membrane pass occupies residues 75 to 95; the sequence is ISSLITFTSMVITMISSSWTL. The Extracellular portion of the chain corresponds to 96–111; it reads PSTHIIEHFHISHEVS. Residues 112-132 traverse the membrane as a helical segment; the sequence is TLGITLYVFGLGIGPLFLSPL. Residues 133 to 141 lie on the Cytoplasmic side of the membrane; the sequence is SELYGRRIT. Residues 142–162 form a helical membrane-spanning segment; the sequence is FLYALTLSIIWQCLTIWSKTI. Residues 163–170 are Extracellular-facing; the sequence is TGVMFGRF. The helical transmembrane segment at 171-191 threads the bilayer; sequence LSGFFGSAFLSVAGGAIADIF. The Cytoplasmic portion of the chain corresponds to 192–200; sequence DKDQIGIPM. A helical membrane pass occupies residues 201–221; that stretch reads AIYTTSAFLGPSLGPIIGGAL. The Extracellular portion of the chain corresponds to 222–227; it reads YHQSYK. Residues 228–248 traverse the membrane as a helical segment; the sequence is WTFITLLITSGCCLVMIIFTI. Residues 249–307 lie on the Cytoplasmic side of the membrane; sequence PETYKPMLLIRKAKRLRKEKNDQRYYAVLEVTREQTSLLSAIFLSTKRPFGLLLRDRMM. The helical transmembrane segment at 308 to 328 threads the bilayer; it reads GVLCFYTGLELAIIYLYFVAF. The Extracellular portion of the chain corresponds to 329–342; the sequence is PYVFKKLYNFGPME. A helical transmembrane segment spans residues 343–363; sequence IACSYIGIMVGMILSAPTCLL. The Cytoplasmic portion of the chain corresponds to 364 to 386; the sequence is FQKTFEWRVKRNNGVKTPEMRFE. Residues 387-407 traverse the membrane as a helical segment; sequence PLFYGAFLTPVGLFIFAFTCY. Over 408–412 the chain is Extracellular; that stretch reads KHVHW. The helical transmembrane segment at 413-433 threads the bilayer; that stretch reads IAPIIGSAIFGSGVYFVFTGV. Residues 434 to 447 lie on the Cytoplasmic side of the membrane; that stretch reads FAYTVDAYRRYAAS. A helical membrane pass occupies residues 448–468; it reads GMACNTFVRCIMAGVFPLFGL. Topologically, residues 469–477 are extracellular; it reads QMYKSMGVN. Residues 478–498 form a helical membrane-spanning segment; that stretch reads WAGFLLAMVTVAMIPVPFLFT. At 499 to 514 the chain is on the cytoplasmic side; the sequence is KYGARLRAKSPYAWDD.

Belongs to the major facilitator superfamily. CAR1 family.

It is found in the membrane. Probable drug/proton antiporter. In Saccharomyces cerevisiae (strain ATCC 204508 / S288c) (Baker's yeast), this protein is Probable drug/proton antiporter YHK8 (YHK8).